Consider the following 456-residue polypeptide: ACT domain-containing protein ACR5 (456 aa).

ACT domains follow at residues 39–115, 130–207, 271–347, and 349–432; these read VIKV…FSPS, VVEL…SSGR, IVMI…VSEG, and KLEL…PSPQ.

As to expression, expressed in stems and siliques.

Functionally, may bind amino acids. The sequence is that of ACT domain-containing protein ACR5 from Arabidopsis thaliana (Mouse-ear cress).